Here is a 109-residue protein sequence, read N- to C-terminus: U26-theraphotoxin-Cg1a (109 aa).

The first 18 residues, 1–18 (MNTIIPLLLLSLLITVYA), serve as a signal peptide directing secretion. A propeptide spanning residues 19–67 (YALEDGNKEEIQDIAESEFEASNEMLQLAHLLEADRAETEEDRNSRQKR) is cleaved from the precursor. 3 disulfide bridges follow: cysteine 68-cysteine 83, cysteine 75-cysteine 88, and cysteine 82-cysteine 103.

It belongs to the neurotoxin 14 (magi-1) family. 07 (Jztx-56) subfamily. In terms of tissue distribution, expressed by the venom gland.

It localises to the secreted. Its function is as follows. Probable ion channel inhibitor. The sequence is that of U26-theraphotoxin-Cg1a from Chilobrachys guangxiensis (Chinese earth tiger tarantula).